The chain runs to 728 residues: Lanosterol synthase (728 aa).

The PFTB 1 repeat unit spans residues 117 to 159 (RVEMIRYIVNTAHPVDGGWGLHSVDKSTCFGTTMNYVCLRLLG). The active-site Proton donor is D450. PFTB repeat units lie at residues 561-602 (ISSA…HTVG) and 611-657 (VKKG…ALIG).

This sequence belongs to the terpene cyclase/mutase family.

The protein localises to the lipid droplet. It is found in the endoplasmic reticulum membrane. It catalyses the reaction (S)-2,3-epoxysqualene = lanosterol. It functions in the pathway terpene metabolism; lanosterol biosynthesis; lanosterol from farnesyl diphosphate: step 3/3. Its function is as follows. Lanosterol synthase; part of the third module of ergosterol biosynthesis pathway that includes the late steps of the pathway. ERG7 catalyzes the cyclization of (S)-2,3 oxidosqualene to lanosterol, a reaction that forms the sterol core. The third module or late pathway involves the ergosterol synthesis itself through consecutive reactions that mainly occur in the endoplasmic reticulum (ER) membrane. Firstly, the squalene synthase ERG9 catalyzes the condensation of 2 farnesyl pyrophosphate moieties to form squalene, which is the precursor of all steroids. Squalene synthase is crucial for balancing the incorporation of farnesyl diphosphate (FPP) into sterol and nonsterol isoprene synthesis. Secondly, the squalene epoxidase ERG1 catalyzes the stereospecific oxidation of squalene to (S)-2,3-epoxysqualene, which is considered to be a rate-limiting enzyme in steroid biosynthesis. Then, the lanosterol synthase ERG7 catalyzes the cyclization of (S)-2,3 oxidosqualene to lanosterol, a reaction that forms the sterol core. In the next steps, lanosterol is transformed to zymosterol through a complex process involving various demethylation, reduction and desaturation reactions. The lanosterol 14-alpha-demethylase ERG11 (also known as CYP51) catalyzes C14-demethylation of lanosterol to produce 4,4'-dimethyl cholesta-8,14,24-triene-3-beta-ol, which is critical for ergosterol biosynthesis. The C-14 reductase ERG24 reduces the C14=C15 double bond of 4,4-dimethyl-cholesta-8,14,24-trienol to produce 4,4-dimethyl-cholesta-8,24-dienol. 4,4-dimethyl-cholesta-8,24-dienol is substrate of the C-4 demethylation complex ERG25-ERG26-ERG27 in which ERG25 catalyzes the three-step monooxygenation required for the demethylation of 4,4-dimethyl and 4alpha-methylsterols, ERG26 catalyzes the oxidative decarboxylation that results in a reduction of the 3-beta-hydroxy group at the C-3 carbon to an oxo group, and ERG27 is responsible for the reduction of the keto group on the C-3. ERG28 has a role as a scaffold to help anchor ERG25, ERG26 and ERG27 to the endoplasmic reticulum and ERG29 regulates the activity of the iron-containing C4-methylsterol oxidase ERG25. Then, the sterol 24-C-methyltransferase ERG6 catalyzes the methyl transfer from S-adenosyl-methionine to the C-24 of zymosterol to form fecosterol. The C-8 sterol isomerase ERG2 catalyzes the reaction which results in unsaturation at C-7 in the B ring of sterols and thus converts fecosterol to episterol. The sterol-C5-desaturase ERG3 then catalyzes the introduction of a C-5 double bond in the B ring to produce 5-dehydroepisterol. The C-22 sterol desaturase ERG5 further converts 5-dehydroepisterol into ergosta-5,7,22,24(28)-tetraen-3beta-ol by forming the C-22(23) double bond in the sterol side chain. Finally, ergosta-5,7,22,24(28)-tetraen-3beta-ol is substrate of the C-24(28) sterol reductase ERG4 to produce ergosterol. This chain is Lanosterol synthase, found in Candida albicans (strain SC5314 / ATCC MYA-2876) (Yeast).